Here is a 312-residue protein sequence, read N- to C-terminus: Small ribosomal subunit protein RACK1 (312 aa).

WD repeat units follow at residues 9 to 42 (GHRG…ISWK), 63 to 93 (GHTG…RMWD), 105 to 135 (KHTK…RVWN), 148 to 180 (GHED…KVWN), 192 to 222 (GHSN…LLWD), 233 to 262 (NVES…SVYD), and 279 to 307 (PSEC…RVWS).

This sequence belongs to the WD repeat G protein beta family. Ribosomal protein RACK1 subfamily.

The polypeptide is Small ribosomal subunit protein RACK1 (Leishmania chagasi).